Here is a 299-residue protein sequence, read N- to C-terminus: MSSIKIECVLPENCRCGESPVWEEASDSLLFVDIPAKKLCRWDSLTKQVQRVTMDAPVSSVALRQSGGYVATIGTKFCALNWEEQSAVVLATVDNDKKNNRFNDGKVDPAGRYFAGTMAEETAPAVLERHQGSLYSLFPDHHVKKYFDQVDISNGLDWSLDHKIFYYIDSLSYSVDAFDYDLQTGQISNRRSVYKLEKEEQIPDGMCIDAEGKLWVACYNGGRVIRLDPVTGKRLQTVKLPVDKTTSCCFGGKNYSEMYVTCARDGMDPEGLLRQPEAGGIFKITGLGVKGIAPYSYAG.

Glu-18 lines the a divalent metal cation pocket. Arg-101, Asn-103, and Glu-121 together coordinate substrate. Residue Lys-144 is modified to N6-succinyllysine. A divalent metal cation is bound by residues Asn-154 and Asp-204. Residue Asp-204 is the Proton donor/acceptor of the active site. N6-succinyllysine occurs at positions 244 and 253.

Belongs to the SMP-30/CGR1 family. Monomer. Requires Zn(2+) as cofactor. The cofactor is Mn(2+). Ca(2+) is required as a cofactor. It depends on Mg(2+) as a cofactor.

The protein resides in the cytoplasm. It carries out the reaction D-glucono-1,5-lactone + H2O = D-gluconate + H(+). In terms of biological role, gluconolactonase with low activity towards other sugar lactones, including gulonolactone and galactonolactone. Can also hydrolyze diisopropyl phosphorofluoridate and phenylacetate (in vitro). Calcium-binding protein. Modulates Ca(2+) signaling, and Ca(2+)-dependent cellular processes and enzyme activities. The sequence is that of Regucalcin (RGN) from Macaca fascicularis (Crab-eating macaque).